Reading from the N-terminus, the 331-residue chain is NADH-quinone oxidoreductase subunit H (331 aa).

Helical transmembrane passes span 7 to 27 (ALVT…AVVI), 81 to 101 (MIFT…FAIV), 114 to 134 (IGIL…LFAG), 154 to 174 (ISYE…VGSF), 187 to 207 (VWFI…GVAV), 238 to 258 (FFVG…TLFF), 271 to 291 (WLSF…FILI), and 310 to 330 (VCLP…LAAA).

Belongs to the complex I subunit 1 family. In terms of assembly, NDH-1 is composed of 13 different subunits. Subunits NuoA, H, J, K, L, M, N constitute the membrane sector of the complex.

It localises to the cell inner membrane. It catalyses the reaction a quinone + NADH + 5 H(+)(in) = a quinol + NAD(+) + 4 H(+)(out). Its function is as follows. NDH-1 shuttles electrons from NADH, via FMN and iron-sulfur (Fe-S) centers, to quinones in the respiratory chain. The immediate electron acceptor for the enzyme in this species is believed to be ubiquinone. Couples the redox reaction to proton translocation (for every two electrons transferred, four hydrogen ions are translocated across the cytoplasmic membrane), and thus conserves the redox energy in a proton gradient. This subunit may bind ubiquinone. The chain is NADH-quinone oxidoreductase subunit H from Pseudomonas aeruginosa (strain ATCC 15692 / DSM 22644 / CIP 104116 / JCM 14847 / LMG 12228 / 1C / PRS 101 / PAO1).